Reading from the N-terminus, the 1213-residue chain is uncharacterized protein (1213 aa).

The region spanning 289–390 is the PH domain; that stretch reads ATKRQGWLLR…WGSVINNARE (102 aa). In terms of domain architecture, VASt spans 776 to 945; that stretch reads LDDIVFDRVY…EVNFLEKATR (170 aa). Helical transmembrane passes span 996 to 1016 and 1025 to 1045; these read LFLQ…FHIF and FLVI…FCFG.

The protein localises to the cytoplasm. The protein resides in the nucleus membrane. It localises to the cytoskeleton. It is found in the microtubule organizing center. Its subcellular location is the spindle pole body. This is an uncharacterized protein from Schizosaccharomyces pombe (strain 972 / ATCC 24843) (Fission yeast).